The sequence spans 170 residues: NADH-quinone oxidoreductase subunit B (170 aa).

Cysteine 42, cysteine 43, cysteine 107, and cysteine 136 together coordinate [4Fe-4S] cluster.

Belongs to the complex I 20 kDa subunit family. NDH-1 is composed of 14 different subunits. Subunits NuoB, C, D, E, F, and G constitute the peripheral sector of the complex. The cofactor is [4Fe-4S] cluster.

Its subcellular location is the cell inner membrane. It catalyses the reaction a quinone + NADH + 5 H(+)(in) = a quinol + NAD(+) + 4 H(+)(out). In terms of biological role, NDH-1 shuttles electrons from NADH, via FMN and iron-sulfur (Fe-S) centers, to quinones in the respiratory chain. The immediate electron acceptor for the enzyme in this species is believed to be ubiquinone. Couples the redox reaction to proton translocation (for every two electrons transferred, four hydrogen ions are translocated across the cytoplasmic membrane), and thus conserves the redox energy in a proton gradient. The chain is NADH-quinone oxidoreductase subunit B from Campylobacter concisus (strain 13826).